A 213-amino-acid polypeptide reads, in one-letter code: Riboflavin synthase (213 aa).

2 Lumazine-binding repeats span residues 1-97 and 98-195; these read MFTG…IGGH and LMSG…VDTV. Residues 4-6, 48-50, 62-67, 101-103, K137, 146-148, and 160-165 each bind 2,4-dihydroxypteridine; these read GIV, CLT, DLMKET, GHI, SLT, and HLIPET.

Homotrimer. Unlike in B.subtilis, does not interact with 6,7-dimethyl-8-ribityllumazine synthase.

It catalyses the reaction 2 6,7-dimethyl-8-(1-D-ribityl)lumazine + H(+) = 5-amino-6-(D-ribitylamino)uracil + riboflavin. Its pathway is cofactor biosynthesis; riboflavin biosynthesis; riboflavin from 2-hydroxy-3-oxobutyl phosphate and 5-amino-6-(D-ribitylamino)uracil: step 2/2. In terms of biological role, catalyzes the dismutation of two molecules of 6,7-dimethyl-8-ribityllumazine, resulting in the formation of riboflavin and 5-amino-6-(D-ribitylamino)uracil. The sequence is that of Riboflavin synthase (ribC) from Escherichia coli (strain K12).